Consider the following 156-residue polypeptide: 6,7-dimethyl-8-ribityllumazine synthase (156 aa).

5-amino-6-(D-ribitylamino)uracil is bound by residues Phe-23, 57-59 (AYE), and 81-83 (AII). 86–87 (GT) contacts (2S)-2-hydroxy-3-oxobutyl phosphate. The active-site Proton donor is the His-89. Phe-114 provides a ligand contact to 5-amino-6-(D-ribitylamino)uracil. Arg-128 contributes to the (2S)-2-hydroxy-3-oxobutyl phosphate binding site.

The protein belongs to the DMRL synthase family.

It catalyses the reaction (2S)-2-hydroxy-3-oxobutyl phosphate + 5-amino-6-(D-ribitylamino)uracil = 6,7-dimethyl-8-(1-D-ribityl)lumazine + phosphate + 2 H2O + H(+). It participates in cofactor biosynthesis; riboflavin biosynthesis; riboflavin from 2-hydroxy-3-oxobutyl phosphate and 5-amino-6-(D-ribitylamino)uracil: step 1/2. Catalyzes the formation of 6,7-dimethyl-8-ribityllumazine by condensation of 5-amino-6-(D-ribitylamino)uracil with 3,4-dihydroxy-2-butanone 4-phosphate. This is the penultimate step in the biosynthesis of riboflavin. The polypeptide is 6,7-dimethyl-8-ribityllumazine synthase (Helicobacter pylori (strain ATCC 700392 / 26695) (Campylobacter pylori)).